A 561-amino-acid chain; its full sequence is FAD-binding monooxygenase tazF (561 aa).

Residues Thr-74–Asp-77, Asp-86–Ile-87, and Tyr-92 each bind FAD. Gly-84–Asp-86 contacts NADP(+). NADP(+) is bound by residues Asn-212–Gln-218 and Arg-235–His-236.

Belongs to the FAD-binding monooxygenase family. It depends on FAD as a cofactor.

Its pathway is secondary metabolite biosynthesis. Its function is as follows. FAD-binding monooxygenase; part of the gene cluster that mediates the biosynthesis of azaterrilone A and other azaphilones, a class of fungal metabolites characterized by a highly oxygenated pyrano-quinone bicyclic core and exhibiting a broad range of bioactivities. The first step of the pathway begins with the non-reducing polyketide synthase tazA that assembles one acetyl-CoA starter unit, five malonyl-CoA units, and catalyzes a series of Claisen condensations, methylation, PT-mediated cyclization, and finally releases the first hexaketide precursor through the R-domain. The tazA product then undergoes reduction on its terminal ketone and the following pyran-ring formation by yet undetermined enzyme(s). Dehydration and enoyl reduction, possibly involving the trans-enoyl reductase tazE leads to the next intermediate. TazD is predicted as an acetyltransferase and might catalyze the acetylation steps leading to the synthesis of azaterrilone A. Azaterrilone A is not the final product of the taz pathway and both the highly reducing polyketide synthase tazB and the dual enzyme tazHJ catalyze late steps of the pathway, leading to the production of the 2 final stereoisomers that contain additional polyketide modification whose structures have still to be determined. In Aspergillus terreus (strain NIH 2624 / FGSC A1156), this protein is FAD-binding monooxygenase tazF.